The sequence spans 280 residues: uncharacterized protein (280 aa).

The segment covering 1–10 has biased composition (basic residues); it reads MSSSIKKLKK. The tract at residues 1–45 is disordered; sequence MSSSIKKLKKDTKDTDKTPSKKIYQETHNSEDSEDSEDSDNENNT. The segment covering 11-31 has biased composition (basic and acidic residues); the sequence is DTKDTDKTPSKKIYQETHNSE. Positions 32–41 are enriched in acidic residues; sequence DSEDSEDSDN.

This is an uncharacterized protein from Acanthamoeba polyphaga mimivirus (APMV).